Here is a 299-residue protein sequence, read N- to C-terminus: Small ribosomal subunit biogenesis GTPase RsgA (299 aa).

A CP-type G domain is found at 64–225 (KNEMIRPPVA…VGDTPGFSSL (162 aa)). GTP-binding positions include 113-116 (TKTD) and 168-176 (GQTGAGKST). Zn(2+)-binding residues include cysteine 249, cysteine 254, histidine 256, and cysteine 262.

The protein belongs to the TRAFAC class YlqF/YawG GTPase family. RsgA subfamily. In terms of assembly, monomer. Associates with 30S ribosomal subunit, binds 16S rRNA. The cofactor is Zn(2+).

It localises to the cytoplasm. Functionally, one of several proteins that assist in the late maturation steps of the functional core of the 30S ribosomal subunit. Helps release RbfA from mature subunits. May play a role in the assembly of ribosomal proteins into the subunit. Circularly permuted GTPase that catalyzes slow GTP hydrolysis, GTPase activity is stimulated by the 30S ribosomal subunit. In Latilactobacillus sakei subsp. sakei (strain 23K) (Lactobacillus sakei subsp. sakei), this protein is Small ribosomal subunit biogenesis GTPase RsgA.